A 1012-amino-acid polypeptide reads, in one-letter code: Structural polyprotein (1012 aa).

Asp-30 is an a divalent metal cation binding site. Positions 513–755 (ADKGYEVVAN…AGRQYHLAMA (243 aa)) constitute a Peptidase S50 domain. Ser-652 serves as the catalytic Nucleophile. The active site involves Lys-692. Positions 970-1012 (MEMKHRNPRRAPPKPKPKPNAPSQRPPGRLGRWIRTVSDEDLE) are disordered. The segment covering 975–986 (RNPRRAPPKPKP) has biased composition (basic residues). The interval 1003–1012 (IRTVSDEDLE) is interaction with VP1 protein.

As to quaternary structure, homotrimer. A central divalent metal stabilizes the VP2 trimer. Interacts with host ITGA4/ITGB1. In terms of assembly, homodimer. Interacts (via C-terminus) with VP1 in the cytoplasm. Interacts with VP2. Post-translationally, specific enzymatic cleavages yield mature proteins. The capsid assembly seems to be regulated by polyprotein processing. The protease VP4 cleaves itself off the polyprotein, thus releasing pre-VP2 and VP3 within the infected cell. During capsid assembly, the C-terminus of pre-VP2 is further processed by VP4, giving rise to VP2, the external capsid protein and three small peptides that all stay closely associated with the capsid.

It is found in the virion. The protein resides in the host cytoplasm. In terms of biological role, capsid protein VP2 self assembles to form an icosahedral capsid with a T=13 symmetry, about 70 nm in diameter, and consisting of 260 VP2 trimers. The capsid encapsulates the genomic dsRNA. VP2 is also involved in attachment and entry into the host cell by interacting with host ITGA4/ITGB1. The precursor of VP2 plays an important role in capsid assembly. First, pre-VP2 and VP2 oligomers assemble to form a procapsid. Then, the pre-VP2 intermediates may be processed into VP2 proteins by proteolytic cleavage mediated by VP4 to obtain the mature virion. The final capsid is composed of pentamers and hexamers but VP2 has a natural tendency to assemble into all-pentameric structures. Therefore pre-VP2 may be required to allow formation of the hexameric structures. Its function is as follows. Protease VP4 is a serine protease that cleaves the polyprotein into its final products. Pre-VP2 is first partially cleaved, and may be completely processed by VP4 upon capsid maturation. Functionally, capsid protein VP3 plays a key role in virion assembly by providing a scaffold for the capsid made of VP2. May self-assemble to form a T=4-like icosahedral inner-capsid composed of at least 180 trimers. Plays a role in genomic RNA packaging by recruiting VP1 into the capsid and interacting with the dsRNA genome segments to form a ribonucleoprotein complex. Additionally, the interaction of the VP3 C-terminal tail with VP1 removes the inherent structural blockade of the polymerase active site. Thus, VP3 can also function as a transcriptional activator. In terms of biological role, structural peptide 1 is a small peptide derived from pre-VP2 C-terminus. It destabilizes and perforates cell membranes, suggesting a role during entry. Structural peptide 2 is a small peptide derived from pVP2 C-terminus. It is not essential for the virus viability, but viral growth is affected when missing. Its function is as follows. Structural peptide 3 is a small peptide derived from pVP2 C-terminus. It is not essential for the virus viability, but viral growth is affected when missing. Functionally, structural peptide 4 is a small peptide derived from pVP2 C-terminus. It is essential for the virus viability. In Avian infectious bursal disease virus (strain Australian 002-73) (IBDV), this protein is Structural polyprotein.